A 54-amino-acid chain; its full sequence is VATVDCSDYPKPACTLEYMPLCGSDNKTYGNRCNFCNAVVDSNGTLTLSHFGKC.

Positions 4-54 constitute a Kazal-like domain; it reads VDCSDYPKPACTLEYMPLCGSDNKTYGNRCNFCNAVVDSNGTLTLSHFGKC. Cystine bridges form between Cys-6/Cys-36, Cys-14/Cys-33, and Cys-22/Cys-54. Residue Asn-43 is glycosylated (N-linked (GlcNAc...) asparagine).

The protein localises to the secreted. The protein is Ovomucoid of Dendrocygna viduata (White-faced whistling-duck).